The chain runs to 251 residues: Ribosomal RNA small subunit methyltransferase J (251 aa).

S-adenosyl-L-methionine contacts are provided by residues 100–101, 116–117, and Asp-170; these read RD and ER.

This sequence belongs to the methyltransferase superfamily. RsmJ family.

The protein localises to the cytoplasm. It carries out the reaction guanosine(1516) in 16S rRNA + S-adenosyl-L-methionine = N(2)-methylguanosine(1516) in 16S rRNA + S-adenosyl-L-homocysteine + H(+). In terms of biological role, specifically methylates the guanosine in position 1516 of 16S rRNA. The protein is Ribosomal RNA small subunit methyltransferase J of Haemophilus ducreyi (strain 35000HP / ATCC 700724).